A 208-amino-acid chain; its full sequence is Cytidylate kinase (208 aa).

7-15 (GPAASGKGT) contacts ATP.

This sequence belongs to the cytidylate kinase family. Type 1 subfamily.

The protein localises to the cytoplasm. The enzyme catalyses CMP + ATP = CDP + ADP. It carries out the reaction dCMP + ATP = dCDP + ADP. The sequence is that of Cytidylate kinase from Xanthobacter autotrophicus (strain ATCC BAA-1158 / Py2).